Here is a 388-residue protein sequence, read N- to C-terminus: Succinate--CoA ligase [ADP-forming] subunit beta (388 aa).

Residues 9–244 (KQLFARYGMP…KSQEDEREAQ (236 aa)) form the ATP-grasp domain. ATP is bound by residues lysine 46, 53 to 55 (GRG), glutamate 99, threonine 102, and glutamate 107. Residues asparagine 199 and aspartate 213 each contribute to the Mg(2+) site. Residues asparagine 264 and 321–323 (GIV) each bind substrate.

It belongs to the succinate/malate CoA ligase beta subunit family. As to quaternary structure, heterotetramer of two alpha and two beta subunits. The cofactor is Mg(2+).

It catalyses the reaction succinate + ATP + CoA = succinyl-CoA + ADP + phosphate. The enzyme catalyses GTP + succinate + CoA = succinyl-CoA + GDP + phosphate. The protein operates within carbohydrate metabolism; tricarboxylic acid cycle; succinate from succinyl-CoA (ligase route): step 1/1. Functionally, succinyl-CoA synthetase functions in the citric acid cycle (TCA), coupling the hydrolysis of succinyl-CoA to the synthesis of either ATP or GTP and thus represents the only step of substrate-level phosphorylation in the TCA. The beta subunit provides nucleotide specificity of the enzyme and binds the substrate succinate, while the binding sites for coenzyme A and phosphate are found in the alpha subunit. The sequence is that of Succinate--CoA ligase [ADP-forming] subunit beta from Yersinia enterocolitica serotype O:8 / biotype 1B (strain NCTC 13174 / 8081).